The following is a 1356-amino-acid chain: Kinesin-like protein KIF24 (1356 aa).

Residues 1-64 enclose the SAM domain; it reads MASWLYECLC…FQLIKIIKIM (64 aa). The segment at 93–119 is disordered; sequence GPRRQLHFDSPSASKDKMANNETGSLS. S102 carries the post-translational modification Phosphoserine. The 324-residue stretch at 218–541 folds into the Kinesin motor domain; it reads KIRVCVRKRP…LRYADRVKEL (324 aa). 308-315 is an ATP binding site; sequence GQTGAGKT. Residue S473 is modified to Phosphoserine. The interaction with MPHOSPH9 stretch occupies residues 473 to 702; sequence SLLALKECIR…PTRGKKVQPV (230 aa). Residues 552–571 are compositionally biased toward polar residues; it reads TSQNQTSANASPKRIQSSPV. Disordered stretches follow at residues 552-581, 597-664, 788-840, 897-947, and 964-998; these read TSQNQTSANASPKRIQSSPVTLPGDKCSPK, PTKV…LCSE, EGRL…STAL, RGAL…HQKP, and VPEQAEGSLSSPSPENGLSFPLSHVAVSGSPDQRD. At S579 the chain carries Phosphoserine. Position 615 is a phosphothreonine; by NEK2 (T615). S616 carries the post-translational modification Phosphoserine; by NEK2. Phosphoserine is present on residues S640, S817, and S820. Residues 640–653 are compositionally biased toward basic residues; it reads SPRKGTTRSGHSIK. The span at 810–821 shows a compositional bias: acidic residues; it reads QAEDLDDSDFSE. The segment covering 830 to 840 has biased composition (polar residues); that stretch reads QPAMKQGSTAL. The span at 970-979 shows a compositional bias: polar residues; sequence GSLSSPSPEN. S1008 is subject to Phosphoserine. Residues 1109 to 1140 form a disordered region; sequence LSSSPPDNRPSGDLPALSPSPIHQHSPDKLPG.

This sequence belongs to the TRAFAC class myosin-kinesin ATPase superfamily. Kinesin family. As to quaternary structure, interacts with CCP110, CEP97, TALPID3. Interacts with MPHOSPH9. Expressed in brain, spinal cord, and small intestine.

The protein localises to the cytoplasm. It is found in the cytoskeleton. Its subcellular location is the microtubule organizing center. The protein resides in the centrosome. It localises to the centriole. Its function is as follows. Microtubule-dependent motor protein that acts as a negative regulator of ciliogenesis by mediating recruitment of CCP110 to mother centriole in cycling cells, leading to restrict nucleation of cilia at centrioles. Mediates depolymerization of microtubules of centriolar origin, possibly to suppress aberrant cilia formation. Following activation by NEK2 involved in disassembly of primary cilium during G2/M phase but does not disassemble fully formed ciliary axonemes. As cilium assembly and disassembly is proposed to coexist in a dynamic equilibrium may suppress nascent cilium assembly and, potentially, ciliar re-assembly in cells that have already disassembled their cilia ensuring the completion of cilium removal in the later stages of the cell cycle. Plays an important role in recruiting MPHOSPH9, a negative regulator of cilia formation to the distal end of mother centriole. The sequence is that of Kinesin-like protein KIF24 (Kif24) from Mus musculus (Mouse).